Reading from the N-terminus, the 626-residue chain is Phosphomethylpyrimidine synthase (626 aa).

Basic and acidic residues predominate over residues 92 to 106 (AREVKPEDNGLKGPD). The tract at residues 92 to 117 (AREVKPEDNGLKGPDRSAGVPPFPNV) is disordered. Residues Asn-219, Met-248, Tyr-277, His-313, 333–335 (SRG), 374–377 (DGLR), and Glu-413 each bind substrate. His-417 is a binding site for Zn(2+). Tyr-440 contacts substrate. His-481 contacts Zn(2+). [4Fe-4S] cluster-binding residues include Cys-561, Cys-564, and Cys-569.

The protein belongs to the ThiC family. As to quaternary structure, homodimer. It depends on [4Fe-4S] cluster as a cofactor.

The catalysed reaction is 5-amino-1-(5-phospho-beta-D-ribosyl)imidazole + S-adenosyl-L-methionine = 4-amino-2-methyl-5-(phosphooxymethyl)pyrimidine + CO + 5'-deoxyadenosine + formate + L-methionine + 3 H(+). It participates in cofactor biosynthesis; thiamine diphosphate biosynthesis. Its function is as follows. Catalyzes the synthesis of the hydroxymethylpyrimidine phosphate (HMP-P) moiety of thiamine from aminoimidazole ribotide (AIR) in a radical S-adenosyl-L-methionine (SAM)-dependent reaction. This Novosphingobium aromaticivorans (strain ATCC 700278 / DSM 12444 / CCUG 56034 / CIP 105152 / NBRC 16084 / F199) protein is Phosphomethylpyrimidine synthase.